Here is a 63-residue protein sequence, read N- to C-terminus: Large ribosomal subunit protein bL28c (63 aa).

This sequence belongs to the bacterial ribosomal protein bL28 family.

The protein localises to the plastid. The protein resides in the chloroplast. This is Large ribosomal subunit protein bL28c (rpl28) from Porphyra purpurea (Red seaweed).